A 535-amino-acid chain; its full sequence is Keratin, type II cytoskeletal 79 (535 aa).

Composition is skewed to polar residues over residues 1-12 (MRSSVSRQTYST) and 28-38 (QARTSFSSVTV). Residues 1 to 53 (MRSSVSRQTYSTKGAFSSSSASGGGGSQARTSFSSVTVSRNSGRGGGPRCGPS) form a disordered region. A head region spans residues 1 to 141 (MRSSVSRQTY…DPEIQRVRTE (141 aa)). The segment covering 43 to 53 (GRGGGPRCGPS) has biased composition (gly residues). The interval 142-177 (EREQIKTLNNKFASFIDKVRFLEQQNKVLETKWALL) is coil 1A. An IF rod domain is found at 142–457 (EREQIKTLNN…KLLESEESRM (316 aa)). Positions 178–198 (QEQGQKSGVTRNNLEPLFEHF) are linker 1. Residues 199-290 (INNLRGKLDN…HLYEEELSQV (92 aa)) form a coil 1B region. The segment at 291-314 (QTHVSDTSVILSMDNNRNLDLDSI) is linker 12. Residues 315-453 (IAEVKAQYEQ…ATYRKLLESE (139 aa)) are coil 2. Residues 454–535 (ESRMSGECPS…TTVKTSSRRY (82 aa)) form a tail region.

Belongs to the intermediate filament family. As to quaternary structure, heterotetramer of two type I and two type II keratins.

The polypeptide is Keratin, type II cytoskeletal 79 (KRT79) (Bos taurus (Bovine)).